The sequence spans 214 residues: CASP-like protein 0U1 (214 aa).

Residues 1–82 (MATSEAPLLK…GFTSFYQFKG (82 aa)) lie on the Cytoplasmic side of the membrane. Residues 83-103 (VVGVYAAFWVYTVLLIGLYLF) traverse the membrane as a helical segment. Topologically, residues 104 to 112 (SRGPPPGTE) are extracellular. Residues 113 to 133 (FVVHALFTLCMIAFVSLSVIS) form a helical membrane-spanning segment. The Cytoplasmic segment spans residues 134–153 (CTSTVIESDYSVCKNAAYAK). Residues 154–174 (ASLVFAALVVVLNCATCAFVF) form a helical membrane-spanning segment. Over 175 to 214 (KQWRSLQFVGMPENFRPFGRHRHKHGHHAGDADDAIPTHP) the chain is Extracellular. Positions 194–214 (RHRHKHGHHAGDADDAIPTHP) are disordered.

Belongs to the Casparian strip membrane proteins (CASP) family. As to quaternary structure, homodimer and heterodimers.

Its subcellular location is the cell membrane. This chain is CASP-like protein 0U1, found in Ostreococcus tauri.